The following is a 289-amino-acid chain: Bifunctional aminodeoxychorismate lyase / D-amino acid transaminase (289 aa).

R50 serves as a coordination point for pyridoxal 5'-phosphate. K149 is modified (N6-(pyridoxal phosphate)lysine). Pyridoxal 5'-phosphate contacts are provided by Y153, T216, and T217. S252 serves as a coordination point for 2-oxoglutarate. Residue S253 participates in pyridoxal 5'-phosphate binding. M254 and T255 together coordinate 2-oxoglutarate.

This sequence belongs to the class-IV pyridoxal-phosphate-dependent aminotransferase family. As to quaternary structure, homodimer. Pyridoxal 5'-phosphate is required as a cofactor.

The catalysed reaction is 4-amino-4-deoxychorismate = 4-aminobenzoate + pyruvate + H(+). The enzyme catalyses D-alanine + 2-oxoglutarate = D-glutamate + pyruvate. The protein operates within cofactor biosynthesis; tetrahydrofolate biosynthesis; 4-aminobenzoate from chorismate: step 2/2. It participates in cell wall biogenesis; peptidoglycan biosynthesis. Bifunctional enzyme that catalyzes two enzymatic reactions in biochemically unrelated pathways: acts as an aminodeoxychorismate (ADC) lyase (ADCL) in folate biosynthesis, converting 4-amino-4-deoxychorismate (ADC) to 4-aminobenzoate (PABA), and as a D-amino acid transaminase (DAAT) in peptidoglycan (PG) biosynthesis. DAAT activity is strictly restricted to D-alanine and D-glutamate. May function as a metabolic toggle that alternates between ADCL and DAAT activity, prioritizing the former over the latter in response to substrate accumulation. Bifunctionality of this enzyme provides a failsafe mechanism for a metabolic coupling between nucleic acid and cell wall biosynthesis that appears to ensure prioritization of PABA production over D-alanine/D-glutamate biosynthesis. This chain is Bifunctional aminodeoxychorismate lyase / D-amino acid transaminase, found in Mycobacterium tuberculosis (strain ATCC 25618 / H37Rv).